The following is a 196-amino-acid chain: MLTIGVLGLQGAVREHIQSIEACGAEGKIIKRAEELVSVDGLIIPGGESTTMRRLMDTYQFIEPIKAFAAKGKPIFGTCAGLIMLAKHIEDRDNAHLGLLNVSVARNSFGRQVDSFEADLEVKGLDAPFTGVFIRAPHIISADESVEVMAEYDGRIVMAKENNILGCSFHPELTDDHRLTQLFVEMVKTYKTKLAV.

47-49 (GES) provides a ligand contact to L-glutamine. The active-site Nucleophile is the Cys79. L-glutamine is bound by residues Arg106 and 134–135 (IR). Catalysis depends on charge relay system residues His170 and Glu172.

This sequence belongs to the glutaminase PdxT/SNO family. As to quaternary structure, in the presence of PdxS, forms a dodecamer of heterodimers. Only shows activity in the heterodimer.

The catalysed reaction is aldehydo-D-ribose 5-phosphate + D-glyceraldehyde 3-phosphate + L-glutamine = pyridoxal 5'-phosphate + L-glutamate + phosphate + 3 H2O + H(+). The enzyme catalyses L-glutamine + H2O = L-glutamate + NH4(+). The protein operates within cofactor biosynthesis; pyridoxal 5'-phosphate biosynthesis. Catalyzes the hydrolysis of glutamine to glutamate and ammonia as part of the biosynthesis of pyridoxal 5'-phosphate. The resulting ammonia molecule is channeled to the active site of PdxS. The chain is Pyridoxal 5'-phosphate synthase subunit PdxT from Bacillus pumilus (strain SAFR-032).